The sequence spans 224 residues: 7-cyano-7-deazaguanine synthase (224 aa).

10 to 20 (LSGGLDSATVV) contributes to the ATP binding site. Residues Cys-189, Cys-199, Cys-202, and Cys-205 each coordinate Zn(2+).

The protein belongs to the QueC family. It depends on Zn(2+) as a cofactor.

The enzyme catalyses 7-carboxy-7-deazaguanine + NH4(+) + ATP = 7-cyano-7-deazaguanine + ADP + phosphate + H2O + H(+). It functions in the pathway purine metabolism; 7-cyano-7-deazaguanine biosynthesis. Catalyzes the ATP-dependent conversion of 7-carboxy-7-deazaguanine (CDG) to 7-cyano-7-deazaguanine (preQ(0)). This is 7-cyano-7-deazaguanine synthase from Pseudomonas putida (strain W619).